A 389-amino-acid chain; its full sequence is Phospholipid phosphatase-related protein type 2 (389 aa).

The next 2 membrane-spanning stretches (helical) occupy residues 14 to 34 (IIPC…AFFP) and 66 to 86 (FLGV…AGQV). The N-linked (GlcNAc...) asparagine glycan is linked to Asn-102. Transmembrane regions (helical) follow at residues 147 to 167 (AALC…VFRV), 176 to 196 (SLCL…VAEY), and 203 to 223 (VLAG…CVVH). Phosphoserine is present on residues Ser-236 and Ser-249. Disordered stretches follow at residues 255-280 (SVAQ…PQNC) and 295-351 (APAM…GRKL). Residues 265–278 (SHSTPARLTPSKPQ) are compositionally biased toward polar residues. Over residues 314–339 (TPLPLPLPLPAPAPSQGPSPSSPGPG) the composition is skewed to pro residues.

It belongs to the PA-phosphatase related phosphoesterase family.

The protein resides in the membrane. The protein is Phospholipid phosphatase-related protein type 2 of Bos taurus (Bovine).